Reading from the N-terminus, the 313-residue chain is Methionyl-tRNA formyltransferase (313 aa).

111–114 lines the (6S)-5,6,7,8-tetrahydrofolate pocket; that stretch reads SLLP.

It belongs to the Fmt family.

It catalyses the reaction L-methionyl-tRNA(fMet) + (6R)-10-formyltetrahydrofolate = N-formyl-L-methionyl-tRNA(fMet) + (6S)-5,6,7,8-tetrahydrofolate + H(+). In terms of biological role, attaches a formyl group to the free amino group of methionyl-tRNA(fMet). The formyl group appears to play a dual role in the initiator identity of N-formylmethionyl-tRNA by promoting its recognition by IF2 and preventing the misappropriation of this tRNA by the elongation apparatus. In Mesoplasma florum (strain ATCC 33453 / NBRC 100688 / NCTC 11704 / L1) (Acholeplasma florum), this protein is Methionyl-tRNA formyltransferase.